Reading from the N-terminus, the 65-residue chain is Large ribosomal subunit protein bL35 (65 aa).

Residues 1–22 (MPKMKTKSSAKKRFKVTGSGKI) are disordered.

It belongs to the bacterial ribosomal protein bL35 family.

The chain is Large ribosomal subunit protein bL35 from Flavobacterium johnsoniae (strain ATCC 17061 / DSM 2064 / JCM 8514 / BCRC 14874 / CCUG 350202 / NBRC 14942 / NCIMB 11054 / UW101) (Cytophaga johnsonae).